The following is a 345-amino-acid chain: Phosphoribosylformylglycinamidine cyclo-ligase (345 aa).

It belongs to the AIR synthase family.

Its subcellular location is the cytoplasm. It catalyses the reaction 2-formamido-N(1)-(5-O-phospho-beta-D-ribosyl)acetamidine + ATP = 5-amino-1-(5-phospho-beta-D-ribosyl)imidazole + ADP + phosphate + H(+). The protein operates within purine metabolism; IMP biosynthesis via de novo pathway; 5-amino-1-(5-phospho-D-ribosyl)imidazole from N(2)-formyl-N(1)-(5-phospho-D-ribosyl)glycinamide: step 2/2. In Tolumonas auensis (strain DSM 9187 / NBRC 110442 / TA 4), this protein is Phosphoribosylformylglycinamidine cyclo-ligase.